A 190-amino-acid polypeptide reads, in one-letter code: Crossover junction endodeoxyribonuclease RuvC (190 aa).

Active-site residues include Asp-8, Glu-67, and Asp-139. Mg(2+) is bound by residues Asp-8, Glu-67, and Asp-139.

It belongs to the RuvC family. Homodimer which binds Holliday junction (HJ) DNA. The HJ becomes 2-fold symmetrical on binding to RuvC with unstacked arms; it has a different conformation from HJ DNA in complex with RuvA. In the full resolvosome a probable DNA-RuvA(4)-RuvB(12)-RuvC(2) complex forms which resolves the HJ. The cofactor is Mg(2+).

Its subcellular location is the cytoplasm. It carries out the reaction Endonucleolytic cleavage at a junction such as a reciprocal single-stranded crossover between two homologous DNA duplexes (Holliday junction).. Its function is as follows. The RuvA-RuvB-RuvC complex processes Holliday junction (HJ) DNA during genetic recombination and DNA repair. Endonuclease that resolves HJ intermediates. Cleaves cruciform DNA by making single-stranded nicks across the HJ at symmetrical positions within the homologous arms, yielding a 5'-phosphate and a 3'-hydroxyl group; requires a central core of homology in the junction. The consensus cleavage sequence is 5'-(A/T)TT(C/G)-3'. Cleavage occurs on the 3'-side of the TT dinucleotide at the point of strand exchange. HJ branch migration catalyzed by RuvA-RuvB allows RuvC to scan DNA until it finds its consensus sequence, where it cleaves and resolves the cruciform DNA. This is Crossover junction endodeoxyribonuclease RuvC from Actinobacillus succinogenes (strain ATCC 55618 / DSM 22257 / CCUG 43843 / 130Z).